We begin with the raw amino-acid sequence, 232 residues long: Triosephosphate isomerase (232 aa).

Residue 6-8 (NFK) coordinates substrate. Histidine 90 serves as the catalytic Electrophile. Glutamate 159 serves as the catalytic Proton acceptor. The substrate site is built by glycine 165 and serine 195.

It belongs to the triosephosphate isomerase family. As to quaternary structure, homodimer.

The protein resides in the cytoplasm. The enzyme catalyses D-glyceraldehyde 3-phosphate = dihydroxyacetone phosphate. It functions in the pathway carbohydrate biosynthesis; gluconeogenesis. The protein operates within carbohydrate degradation; glycolysis; D-glyceraldehyde 3-phosphate from glycerone phosphate: step 1/1. In terms of biological role, involved in the gluconeogenesis. Catalyzes stereospecifically the conversion of dihydroxyacetone phosphate (DHAP) to D-glyceraldehyde-3-phosphate (G3P). In Wolinella succinogenes (strain ATCC 29543 / DSM 1740 / CCUG 13145 / JCM 31913 / LMG 7466 / NCTC 11488 / FDC 602W) (Vibrio succinogenes), this protein is Triosephosphate isomerase.